Consider the following 859-residue polypeptide: Photoactivated adenylate cyclase subunit beta-like protein FB (859 aa).

The region spanning 56-149 (LRRLMYLSKS…GRMYGDWHMK (94 aa)) is the BLUF 1 domain. Residues 205–333 (VVTFIYLVEF…DCINTTSRIA (129 aa)) enclose the Guanylate cyclase 1 domain. Residues 414 to 449 (GLPNSQRPPIFDDTPKANRRPRTPGYGGRQRSDSQV) are disordered. The 93-residue stretch at 471–563 (LTTLTYISQA…RVYPSEWTLT (93 aa)) folds into the BLUF 2 domain. The region spanning 619 to 748 (VMLATDICSF…AVSARVMEVE (130 aa)) is the Guanylate cyclase 2 domain. The disordered stretch occupies residues 813–859 (AARSGEKPLTEPEAAKPDFRVSPGRVRHGDSGRRSNSAQGKRSIQVR). The segment covering 815 to 831 (RSGEKPLTEPEAAKPDF) has biased composition (basic and acidic residues). Residues 846–859 (RSNSAQGKRSIQVR) are compositionally biased toward polar residues.

This sequence belongs to the adenylyl cyclase class-4/guanylyl cyclase family. In terms of assembly, heterotetramer of two alpha and two beta subunits.

It localises to the cell projection. The protein localises to the cilium. The protein resides in the flagellum. In Euglena gracilis, this protein is Photoactivated adenylate cyclase subunit beta-like protein FB.